Reading from the N-terminus, the 484-residue chain is Aspartyl aminopeptidase (484 aa).

At M1 the chain carries N-acetylmethionine. H84 contributes to the Zn(2+) binding site. H159 contributes to the substrate binding site. The span at 188–206 shows a compositional bias: low complexity; that stretch reads PVESKSTTTTTTTESPKTS. A disordered region spans residues 188 to 213; the sequence is PVESKSTTTTTTTESPKTSDPQDVNS. D266 contacts Zn(2+). E301 is a binding site for substrate. Zn(2+) is bound by residues E302 and D354. Positions 354, 357, 382, and 389 each coordinate substrate. H448 is a Zn(2+) binding site.

This sequence belongs to the peptidase M18 family. As to quaternary structure, tetrahedron-shaped homododecamer built from six homodimers. The cofactor is Zn(2+).

Its subcellular location is the cytoplasm. The catalysed reaction is Release of an N-terminal aspartate or glutamate from a peptide, with a preference for aspartate.. Likely to play an important role in intracellular protein and peptide metabolism. The protein is Aspartyl aminopeptidase (dnpep) of Dictyostelium discoideum (Social amoeba).